Reading from the N-terminus, the 396-residue chain is Elongation factor Tu 1 (396 aa).

Residues 10–206 (KPHCNVGTIG…AVDDYIPQPE (197 aa)) enclose the tr-type G domain. Residues 19–26 (GHVDHGKT) are G1. A GTP-binding site is contributed by 19 to 26 (GHVDHGKT). Threonine 26 is a Mg(2+) binding site. A G2 region spans residues 60–64 (GITIS). Positions 81-84 (DCPG) are G3. GTP contacts are provided by residues 81–85 (DCPGH) and 136–139 (NKCD). Residues 136–139 (NKCD) are G4. Residues 174–176 (SAL) are G5.

Belongs to the TRAFAC class translation factor GTPase superfamily. Classic translation factor GTPase family. EF-Tu/EF-1A subfamily. As to quaternary structure, monomer.

It localises to the cytoplasm. The catalysed reaction is GTP + H2O = GDP + phosphate + H(+). In terms of biological role, GTP hydrolase that promotes the GTP-dependent binding of aminoacyl-tRNA to the A-site of ribosomes during protein biosynthesis. This chain is Elongation factor Tu 1, found in Rhodospirillum rubrum (strain ATCC 11170 / ATH 1.1.1 / DSM 467 / LMG 4362 / NCIMB 8255 / S1).